A 222-amino-acid polypeptide reads, in one-letter code: Charged multivesicular body protein 4a (222 aa).

2 disordered regions span residues 1-21 (MSGL…TPEE) and 180-211 (VGDK…DEDE). The tract at residues 1 to 116 (MSGLGRLFGK…ELAAQSMKKA (116 aa)) is interaction with phosphoinosides. The interval 1-150 (MSGLGRLFGK…QISDAISRPM (150 aa)) is intramolecular interaction with C-terminus. Coiled coils occupy residues 20–105 (EEAI…VLRT) and 155–180 (DVDE…LLNV). The intramolecular interaction with N-terminus stretch occupies residues 151 to 222 (GFGDDVDEDE…ALKQLAEWVS (72 aa)). Phosphoserine is present on S196.

It belongs to the SNF7 family. In terms of assembly, probable core component of the endosomal sorting required for transport complex III (ESCRT-III). ESCRT-III components are thought to multimerize to form a flat lattice on the perimeter membrane of the endosome. Several assembly forms of ESCRT-III may exist that interact and act sequentially. Self-associates; overexpression leads to the assembly of filaments that curve and associate to create circular rings. Interacts with CHMP2A. Interacts with CHMP3; the interaction requires the release of CHMP4A autoinhibition. Interacts with CHMP4B. Interacts with CHMP4C. Interacts with CHMP6. Interacts with VPS4A. Interacts with PDCD6IP; the interaction is direct. Widely expressed. Expressed at higher level in heart, kidney, liver and skeletal muscle. Also expressed in brain, placenta, lung and pancreas.

Its subcellular location is the cytoplasmic vesicle membrane. The protein resides in the late endosome membrane. In terms of biological role, probable core component of the endosomal sorting required for transport complex III (ESCRT-III) which is involved in multivesicular bodies (MVBs) formation and sorting of endosomal cargo proteins into MVBs. MVBs contain intraluminal vesicles (ILVs) that are generated by invagination and scission from the limiting membrane of the endosome and mostly are delivered to lysosomes enabling degradation of membrane proteins, such as stimulated growth factor receptors, lysosomal enzymes and lipids. The MVB pathway appears to require the sequential function of ESCRT-O, -I,-II and -III complexes. ESCRT-III proteins mostly dissociate from the invaginating membrane before the ILV is released. The ESCRT machinery also functions in topologically equivalent membrane fission events, such as the terminal stages of cytokinesis and the budding of enveloped viruses (HIV-1 and other lentiviruses). ESCRT-III proteins are believed to mediate the necessary vesicle extrusion and/or membrane fission activities, possibly in conjunction with the AAA ATPase VPS4. When overexpressed, membrane-assembled circular arrays of CHMP4A filaments can promote or stabilize negative curvature and outward budding. Via its interaction with PDCD6IP involved in HIV-1 p6- and p9-dependent virus release. CHMP4A/B/C are required for the exosomal release of SDCBP, CD63 and syndecan. In Homo sapiens (Human), this protein is Charged multivesicular body protein 4a (CHMP4A).